The following is a 194-amino-acid chain: Small COPII coat GTPase SAR1B (194 aa).

Positions 2-4 (FLV) match the STAR; SAR1-N-terminal activation recruitment. Required for the activation and subsequent recruitment to ER membrane motif. The segment at 10 to 14 (MFLWL) is mediates recruitment to ER membranes. Asn30, Ala31, Gly32, Lys33, Thr34, and Thr35 together coordinate GDP. Position 30 (Asn30) interacts with GTP. The GTP site is built by Gly32, Lys33, Thr34, and Thr35. Residue Asp70 participates in Mg(2+) binding. Residues Lys131, Asp133, and Ile172 each contribute to the GDP site. 3 residues coordinate GTP: Lys131, Asp133, and Ile172.

This sequence belongs to the small GTPase superfamily. SAR1 family. In terms of assembly, homodimer; upon association with membrane. Part of the coat protein complex II/COPII, composed of SEC23/24 and SEC13/31 heterodimers, that it helps recruit and assemble on endoplasmic reticulum (ER) membranes at ER exit sites.

It localises to the endoplasmic reticulum membrane. Its subcellular location is the golgi apparatus. It is found in the golgi stack membrane. The protein localises to the cytoplasm. The protein resides in the cytosol. It carries out the reaction GTP + H2O = GDP + phosphate + H(+). With respect to regulation, small GTPases activation is mediated by guanine exchange factors (GEF), while inactivation through hydrolysis of the bound GTP is stimulated by GTPase activating proteins (GAP). Functionally, small GTPase that cycles between an active GTP-bound and an inactive GDP-bound state and mainly functions in vesicle-mediated endoplasmic reticulum (ER) to Golgi transport. The active GTP-bound form inserts into the endoplasmic reticulum membrane where it recruits the remainder of the coat protein complex II/COPII. The coat protein complex II assembling and polymerizing on endoplasmic reticulum membrane is responsible for both the sorting of cargos and the deformation and budding of membranes into vesicles destined to the Golgi. This is Small COPII coat GTPase SAR1B (sarB) from Dictyostelium discoideum (Social amoeba).